A 422-amino-acid polypeptide reads, in one-letter code: Histidine--tRNA ligase (422 aa).

It belongs to the class-II aminoacyl-tRNA synthetase family. As to quaternary structure, homodimer.

It is found in the cytoplasm. It carries out the reaction tRNA(His) + L-histidine + ATP = L-histidyl-tRNA(His) + AMP + diphosphate + H(+). The chain is Histidine--tRNA ligase from Mycolicibacterium vanbaalenii (strain DSM 7251 / JCM 13017 / BCRC 16820 / KCTC 9966 / NRRL B-24157 / PYR-1) (Mycobacterium vanbaalenii).